An 812-amino-acid chain; its full sequence is Lon protease (812 aa).

The Lon N-terminal domain maps to 22–215 (YAVLPLRDIV…KALSFMEAEI (194 aa)). 367–374 (GPPGVGKT) is an ATP binding site. Residues 602–783 (EDQVGVVTGL…GEVLKHALVR (182 aa)) form the Lon proteolytic domain. Active-site residues include serine 689 and lysine 732. The segment at 787–812 (PIEWTEQENPTAVPPVEDEAGASLAH) is disordered.

It belongs to the peptidase S16 family. As to quaternary structure, homohexamer. Organized in a ring with a central cavity.

It localises to the cytoplasm. It carries out the reaction Hydrolysis of proteins in presence of ATP.. ATP-dependent serine protease that mediates the selective degradation of mutant and abnormal proteins as well as certain short-lived regulatory proteins. Required for cellular homeostasis and for survival from DNA damage and developmental changes induced by stress. Degrades polypeptides processively to yield small peptide fragments that are 5 to 10 amino acids long. Binds to DNA in a double-stranded, site-specific manner. The sequence is that of Lon protease from Brucella melitensis biotype 1 (strain ATCC 23456 / CCUG 17765 / NCTC 10094 / 16M).